A 389-amino-acid polypeptide reads, in one-letter code: S-adenosylmethionine synthase (389 aa).

Residue histidine 17 participates in ATP binding. Aspartate 19 is a binding site for Mg(2+). Glutamate 45 serves as a coordination point for K(+). 2 residues coordinate L-methionine: glutamate 58 and glutamine 101. The tract at residues glutamine 101–glutamate 111 is flexible loop. Residues aspartate 168–lysine 170, arginine 234–phenylalanine 235, aspartate 243, arginine 249–lysine 250, alanine 266, and lysine 270 each bind ATP. Position 243 (aspartate 243) interacts with L-methionine. Lysine 274 lines the L-methionine pocket.

It belongs to the AdoMet synthase family. As to quaternary structure, homotetramer; dimer of dimers. Mg(2+) is required as a cofactor. It depends on K(+) as a cofactor.

It is found in the cytoplasm. The catalysed reaction is L-methionine + ATP + H2O = S-adenosyl-L-methionine + phosphate + diphosphate. It functions in the pathway amino-acid biosynthesis; S-adenosyl-L-methionine biosynthesis; S-adenosyl-L-methionine from L-methionine: step 1/1. Catalyzes the formation of S-adenosylmethionine (AdoMet) from methionine and ATP. The overall synthetic reaction is composed of two sequential steps, AdoMet formation and the subsequent tripolyphosphate hydrolysis which occurs prior to release of AdoMet from the enzyme. The protein is S-adenosylmethionine synthase of Geobacter sp. (strain M21).